Reading from the N-terminus, the 258-residue chain is Probable pectin methylesterase CGR3 (258 aa).

The Cytoplasmic portion of the chain corresponds to 1–29 (MSRRQVRRVGDSGSFPFVGALHSKSRSSP). Residues 30 to 50 (LLSVCLVLVGACLLIGYAYSG) traverse the membrane as a helical segment. The Lumenal segment spans residues 51 to 258 (PGMFKSIREV…CQVFHLKPLH (208 aa)). Asn171 is a glycosylation site (N-linked (GlcNAc...) asparagine).

This sequence belongs to the class I-like SAM-binding methyltransferase superfamily.

Its subcellular location is the golgi apparatus membrane. Its function is as follows. Together with CGR2, required for homogalacturonan pectins (HG) methylesterification in the Golgi apparatus prior to integration into cell walls, essential for general growth and development. Promotes petiole elongation. Impacts photosynthesis and respiration efficiency by influencing leaf mesophyll morphology and physiology; pectin methylesterification modulates both expansion and positioning of cells in leaves, probably by changing cell walls plasticity. The chain is Probable pectin methylesterase CGR3 from Arabidopsis thaliana (Mouse-ear cress).